A 288-amino-acid chain; its full sequence is MVNDTSENQPTTAGIVTTTEDELILQDQQMKRIEDEQKASPLVGEKMPCATLVSLYDQETAPAFFEKANELAKVYSHIRFIRGDGNCFIRAIQVGLVEILLNDKERLVKFIASCKEWTERLVKLGFPDWTCTDFCEFFIEFIEKVRDGIHQKEDVFRIFNDDNTANYLLMFFRLITSGYLKEHAAEYEPFLDEGMSLAQYCETEIEAMWKESDHLGIIALVRALNIRIRIEYMDRNAAPNGGTHHNLPDGHDNATFTPDITLLYRPGHYDLIYKAPAETSKPALPPVA.

The region spanning 76–275 is the OTU domain; sequence SHIRFIRGDG…PGHYDLIYKA (200 aa). The active site involves Asp84. The active-site Nucleophile is Cys87. Ile175 is a binding site for substrate. Residues His244 and His268 contribute to the active site.

The protein belongs to the peptidase C65 family.

The enzyme catalyses Thiol-dependent hydrolysis of ester, thioester, amide, peptide and isopeptide bonds formed by the C-terminal Gly of ubiquitin (a 76-residue protein attached to proteins as an intracellular targeting signal).. In terms of biological role, hydrolase that can remove conjugated ubiquitin from proteins and plays an important regulatory role at the level of protein turnover by preventing degradation. Specifically cleaves 'Lys-48'-linked polyubiquitin. This chain is Ubiquitin thioesterase otubain-like, found in Caenorhabditis briggsae.